A 225-amino-acid chain; its full sequence is ATP synthase subunit a (225 aa).

A run of 6 helical transmembrane segments spans residues 18–38, 73–93, 100–120, 126–146, 156–176, and 187–207; these read LSLNWTSTFLGLLLIPSMFWL, ILISIFIMMLFNNFMGLFPYI, MTLTFSIALPMWMSFMLFGWI, MFTHLVPQGTPNALMSFMVLI, GTLAVRLAANMIAGHLLLTLL, and IMLFLIIGQMLLLILESAVAM.

It belongs to the ATPase A chain family. In terms of assembly, F-type ATPases have 2 components, CF(1) - the catalytic core - and CF(0) - the membrane proton channel. CF(1) has five subunits: alpha(3), beta(3), gamma(1), delta(1), epsilon(1). CF(0) has three main subunits: a, b and c.

It is found in the mitochondrion inner membrane. Mitochondrial membrane ATP synthase (F(1)F(0) ATP synthase or Complex V) produces ATP from ADP in the presence of a proton gradient across the membrane which is generated by electron transport complexes of the respiratory chain. F-type ATPases consist of two structural domains, F(1) - containing the extramembraneous catalytic core and F(0) - containing the membrane proton channel, linked together by a central stalk and a peripheral stalk. During catalysis, ATP synthesis in the catalytic domain of F(1) is coupled via a rotary mechanism of the central stalk subunits to proton translocation. Key component of the proton channel; it may play a direct role in the translocation of protons across the membrane. The chain is ATP synthase subunit a (ATP6) from Locusta migratoria (Migratory locust).